We begin with the raw amino-acid sequence, 114 residues long: Turripeptide OL22 (114 aa).

Contains 6 disulfide bonds. In terms of tissue distribution, expressed by the venom duct.

Its subcellular location is the secreted. Functionally, acts as a neurotoxin by inhibiting an ion channel. In Iotyrris olangoensis (Sea snail), this protein is Turripeptide OL22.